The primary structure comprises 835 residues: Microcephalin (835 aa).

The 93-residue stretch at 1 to 93 (MAAPILKDVV…AHIDESLFPA (93 aa)) folds into the BRCT 1 domain. Serine 279, serine 287, serine 296, and serine 333 each carry phosphoserine. Disordered regions lie at residues 313-381 (PDQK…RRSI) and 419-443 (DNLK…AQLS). Threonine 335 carries the phosphothreonine modification. The segment covering 343–361 (LLIHSRPRSSSVKRKRVSH) has biased composition (basic residues). The segment covering 434–443 (QLPSSPAQLS) has biased composition (polar residues). Phosphoserine is present on serine 548. Residues 555–584 (AVGLKSTQNKGTTSKISNSSEGEAQSEHEP) form a disordered region. Polar residues predominate over residues 559-577 (KSTQNKGTTSKISNSSEGE). 2 consecutive BRCT domains span residues 640 to 730 (SGRG…PFEL) and 751 to 833 (YRGT…NYLL).

As to quaternary structure, interacts with CDC27 and maybe other components of the APC/C complex. Interacts with histone variant H2AX under DNA damage conditions. In terms of tissue distribution, expressed in fetal brain, liver and kidney.

It is found in the cytoplasm. Its subcellular location is the cytoskeleton. The protein localises to the microtubule organizing center. It localises to the centrosome. In terms of biological role, implicated in chromosome condensation and DNA damage induced cellular responses. May play a role in neurogenesis and regulation of the size of the cerebral cortex. This Homo sapiens (Human) protein is Microcephalin.